Consider the following 155-residue polypeptide: 6,7-dimethyl-8-ribityllumazine synthase (155 aa).

5-amino-6-(D-ribitylamino)uracil is bound by residues W22, S56–E58, and A80–I82. D85 to T86 provides a ligand contact to (2S)-2-hydroxy-3-oxobutyl phosphate. H88 (proton donor) is an active-site residue. F113 is a 5-amino-6-(D-ribitylamino)uracil binding site. R127 provides a ligand contact to (2S)-2-hydroxy-3-oxobutyl phosphate.

Belongs to the DMRL synthase family.

It catalyses the reaction (2S)-2-hydroxy-3-oxobutyl phosphate + 5-amino-6-(D-ribitylamino)uracil = 6,7-dimethyl-8-(1-D-ribityl)lumazine + phosphate + 2 H2O + H(+). It functions in the pathway cofactor biosynthesis; riboflavin biosynthesis; riboflavin from 2-hydroxy-3-oxobutyl phosphate and 5-amino-6-(D-ribitylamino)uracil: step 1/2. Functionally, catalyzes the formation of 6,7-dimethyl-8-ribityllumazine by condensation of 5-amino-6-(D-ribitylamino)uracil with 3,4-dihydroxy-2-butanone 4-phosphate. This is the penultimate step in the biosynthesis of riboflavin. The sequence is that of 6,7-dimethyl-8-ribityllumazine synthase from Deinococcus radiodurans (strain ATCC 13939 / DSM 20539 / JCM 16871 / CCUG 27074 / LMG 4051 / NBRC 15346 / NCIMB 9279 / VKM B-1422 / R1).